A 263-amino-acid chain; its full sequence is 3-methyl-2-oxobutanoate hydroxymethyltransferase (263 aa).

Residues D45 and D84 each coordinate Mg(2+). Residues 45 to 46 (DS), D84, and K112 contribute to the 3-methyl-2-oxobutanoate site. E114 is a binding site for Mg(2+). The Proton acceptor role is filled by E180.

This sequence belongs to the PanB family. As to quaternary structure, homodecamer; pentamer of dimers. Requires Mg(2+) as cofactor.

Its subcellular location is the cytoplasm. It carries out the reaction 3-methyl-2-oxobutanoate + (6R)-5,10-methylene-5,6,7,8-tetrahydrofolate + H2O = 2-dehydropantoate + (6S)-5,6,7,8-tetrahydrofolate. The protein operates within cofactor biosynthesis; (R)-pantothenate biosynthesis; (R)-pantoate from 3-methyl-2-oxobutanoate: step 1/2. Catalyzes the reversible reaction in which hydroxymethyl group from 5,10-methylenetetrahydrofolate is transferred onto alpha-ketoisovalerate to form ketopantoate. The chain is 3-methyl-2-oxobutanoate hydroxymethyltransferase from Salmonella paratyphi C (strain RKS4594).